Reading from the N-terminus, the 564-residue chain is Probable diguanylate cyclase DgcQ (564 aa).

The next 2 membrane-spanning stretches (helical) occupy residues 20–40 and 360–380; these read LGPG…STLL and IALT…WYVI. A GGDEF domain is found at 428-563; the sequence is HPFSVIQVDL…GRNRVFASDN (136 aa). Residue Asp436 participates in Mg(2+) binding. Positions 444, 449, and 453 each coordinate substrate. Mg(2+) is bound at residue Glu479. Catalysis depends on Glu479, which acts as the Proton acceptor.

Homodimer. Mg(2+) is required as a cofactor.

The protein resides in the cell inner membrane. The enzyme catalyses 2 GTP = 3',3'-c-di-GMP + 2 diphosphate. The protein operates within glycan metabolism; bacterial cellulose biosynthesis. It participates in purine metabolism; 3',5'-cyclic di-GMP biosynthesis. In terms of biological role, catalyzes the synthesis of cyclic-di-GMP (c-di-GMP) via the condensation of 2 GTP molecules. Cyclic-di-GMP is a second messenger which controls cell surface-associated traits in bacteria. Involved in the regulation of cellulose production. The chain is Probable diguanylate cyclase DgcQ from Shigella dysenteriae serotype 1 (strain Sd197).